The primary structure comprises 271 residues: N-acetyltransferase ECO1 (271 aa).

The disordered stretch occupies residues 1–38 (MKTYRAKRKYLSESEDDVFSSSPTQSPETSPLQPPNES). The segment covering 20 to 31 (SSSPTQSPETSP) has biased composition (low complexity). Residues 80 to 104 (TTCKTCGMTYQVAYGPDISAHKSFH) form a CCHH-type zinc finger.

This sequence belongs to the acetyltransferase family. ECO subfamily.

The protein resides in the nucleus. In terms of biological role, probable acetyltransferase required for the establishment of sister chromatid cohesion and couple the processes of cohesion and DNA replication to ensure that only sister chromatids become paired together. In contrast to the structural cohesins, the deposition and establishment factors are required only during S phase. Acts by acetylating the cohesin complex component SMC3. This is N-acetyltransferase ECO1 (ECO1) from Yarrowia lipolytica (strain CLIB 122 / E 150) (Yeast).